The chain runs to 156 residues: Snaclec A6 (156 aa).

The signal sequence occupies residues 1 to 23 (MGRSISVSFGLLVVFLSLSGTGA). Intrachain disulfides connect Cys-27–Cys-38, Cys-55–Cys-154, and Cys-129–Cys-146. One can recognise a C-type lectin domain in the interval 34-155 (HEGHCYKVFN…CGKPYRFTCE (122 aa)).

The protein belongs to the snaclec family. Heterodimer; disulfide-linked. As to expression, expressed by the venom gland.

It is found in the secreted. Its function is as follows. Interferes with one step of hemostasis (modulation of platelet aggregation, or coagulation cascade, for example). This is Snaclec A6 from Macrovipera lebetinus (Levantine viper).